A 291-amino-acid polypeptide reads, in one-letter code: tRNA-cytidine(32) 2-sulfurtransferase (291 aa).

Residues 36–41 carry the PP-loop motif motif; it reads SGGKDS. Positions 111, 114, and 202 each coordinate [4Fe-4S] cluster. The segment at 258–291 is disordered; that stretch reads RDPWLDAEDEEAEDCGEPPAGDGVVSLGGARGGR. Acidic residues predominate over residues 262–273; it reads LDAEDEEAEDCG.

It belongs to the TtcA family. As to quaternary structure, homodimer. The cofactor is Mg(2+). [4Fe-4S] cluster serves as cofactor.

Its subcellular location is the cytoplasm. It catalyses the reaction cytidine(32) in tRNA + S-sulfanyl-L-cysteinyl-[cysteine desulfurase] + AH2 + ATP = 2-thiocytidine(32) in tRNA + L-cysteinyl-[cysteine desulfurase] + A + AMP + diphosphate + H(+). Its pathway is tRNA modification. Catalyzes the ATP-dependent 2-thiolation of cytidine in position 32 of tRNA, to form 2-thiocytidine (s(2)C32). The sulfur atoms are provided by the cysteine/cysteine desulfurase (IscS) system. This Anaeromyxobacter dehalogenans (strain 2CP-1 / ATCC BAA-258) protein is tRNA-cytidine(32) 2-sulfurtransferase.